A 319-amino-acid chain; its full sequence is Lipase 1 (319 aa).

Residue Ser189 is the Nucleophile of the active site. Ca(2+) is bound by residues Asp314 and Asp317.

The enzyme catalyses a triacylglycerol + H2O = a diacylglycerol + a fatty acid + H(+). The sequence is that of Lipase 1 (lip1) from Moraxella sp. (strain TA144).